The following is a 428-amino-acid chain: Enolase (428 aa).

(2R)-2-phosphoglycerate is bound at residue Gln-163. Catalysis depends on Glu-205, which acts as the Proton donor. Mg(2+) is bound by residues Asp-242, Glu-285, and Asp-312. The (2R)-2-phosphoglycerate site is built by Lys-337, Arg-366, Ser-367, and Lys-388. Residue Lys-337 is the Proton acceptor of the active site.

The protein belongs to the enolase family. Mg(2+) serves as cofactor.

Its subcellular location is the cytoplasm. It is found in the secreted. The protein localises to the cell surface. It catalyses the reaction (2R)-2-phosphoglycerate = phosphoenolpyruvate + H2O. It functions in the pathway carbohydrate degradation; glycolysis; pyruvate from D-glyceraldehyde 3-phosphate: step 4/5. In terms of biological role, catalyzes the reversible conversion of 2-phosphoglycerate (2-PG) into phosphoenolpyruvate (PEP). It is essential for the degradation of carbohydrates via glycolysis. This chain is Enolase, found in Erythrobacter litoralis (strain HTCC2594).